We begin with the raw amino-acid sequence, 406 residues long: MQAAERDGVAGGLEATAAVAATGGGEASSEPPSPPKAASFDLLDLVRSYRRLELYLEPLRDAAEGVRALLRWQRPLCSLLVCLGLNFLLLTLDQAAWYSVLALLVLLPALLGYLQETYRVRPSERELLRRKYHSVRREDLRRVQLSRQEALAQVKCFLIQLEGFLSGLCYNCEAVYRVLYWENPTVSSQFYGALLGSVCILYLLPLCWVMAILNSTLFLGNSQFYQVIKELKASVEQSLGTKPLESAPEPAKPLPTDAPPDRTPTPTSTEDLTPGSVEEAEEAEPDEEFKDAIEEDDEGSQCSADFDLSLPDNGFMSKNDVIRSKVSRLTERLRKRYPSNNFGTCTGCGATFSVLKKRRSCSNCGNSFCSRCCSFKVPKAVMGATAPEAQRETVFVCAQCNQMLIK.

Over 1 to 71 (MQAAERDGVA…AAEGVRALLR (71 aa)) the chain is Cytoplasmic. Residues 1 to 97 (MQAAERDGVA…LLLTLDQAAW (97 aa)) form a sufficient for homooligomerization region. A sufficient for localization to endoplasmic reticulum tubular network region spans residues 1 to 210 (MQAAERDGVA…LYLLPLCWVM (210 aa)). The helical transmembrane segment at 72–92 (WQRPLCSLLVCLGLNFLLLTL) threads the bilayer. A topological domain (lumenal) is located at residue aspartate 93. A helical membrane pass occupies residues 94–114 (QAAWYSVLALLVLLPALLGYL). The Cytoplasmic portion of the chain corresponds to 115–192 (QETYRVRPSE…NPTVSSQFYG (78 aa)). The helical intramembrane region spans 193 to 213 (ALLGSVCILYLLPLCWVMAIL). Over 214-406 (NSTLFLGNSQ…CAQCNQMLIK (193 aa)) the chain is Cytoplasmic. Residues 239–295 (LGTKPLESAPEPAKPLPTDAPPDRTPTPTSTEDLTPGSVEEAEEAEPDEEFKDAIEE) are disordered. Pro residues predominate over residues 250 to 263 (PAKPLPTDAPPDRT). The segment covering 278 to 295 (EEAEEAEPDEEFKDAIEE) has biased composition (acidic residues). Residues 339 to 405 (SNNFGTCTGC…VCAQCNQMLI (67 aa)) form an FYVE-type zinc finger. Residues cysteine 345, cysteine 348, cysteine 361, cysteine 364, cysteine 369, cysteine 372, cysteine 397, and cysteine 400 each contribute to the Zn(2+) site.

Can form homooligomers (monomers, dimers and tetramers).

Its subcellular location is the recycling endosome membrane. It is found in the endoplasmic reticulum membrane. The protein resides in the cell projection. It localises to the growth cone membrane. Its function is as follows. Key regulator of RAB11-dependent vesicular trafficking during neurite extension through polarized membrane transport. Promotes axonal elongation and contributes to the establishment of neuronal cell polarity. Involved in nerve growth factor-induced neurite formation in VAPA-dependent manner. Contributes to both the formation and stabilization of the tubular ER network. Involved in ER morphogenesis by regulating the sheet-to-tubule balance and possibly the density of tubule interconnections. The sequence is that of Protrudin (ZFYVE27) from Gallus gallus (Chicken).